The chain runs to 477 residues: Aspartyl/glutamyl-tRNA(Asn/Gln) amidotransferase subunit B (477 aa).

The protein belongs to the GatB/GatE family. GatB subfamily. As to quaternary structure, heterotrimer of A, B and C subunits.

It catalyses the reaction L-glutamyl-tRNA(Gln) + L-glutamine + ATP + H2O = L-glutaminyl-tRNA(Gln) + L-glutamate + ADP + phosphate + H(+). It carries out the reaction L-aspartyl-tRNA(Asn) + L-glutamine + ATP + H2O = L-asparaginyl-tRNA(Asn) + L-glutamate + ADP + phosphate + 2 H(+). Its function is as follows. Allows the formation of correctly charged Asn-tRNA(Asn) or Gln-tRNA(Gln) through the transamidation of misacylated Asp-tRNA(Asn) or Glu-tRNA(Gln) in organisms which lack either or both of asparaginyl-tRNA or glutaminyl-tRNA synthetases. The reaction takes place in the presence of glutamine and ATP through an activated phospho-Asp-tRNA(Asn) or phospho-Glu-tRNA(Gln). This Coxiella burnetii (strain RSA 493 / Nine Mile phase I) protein is Aspartyl/glutamyl-tRNA(Asn/Gln) amidotransferase subunit B.